The primary structure comprises 115 residues: Rubredoxin (115 aa).

Residues 15–66 (SPNHECRACGYVYIPSQGDQKTSVSPGTPFEALPLNWKCPVCGAPRNYFIST) enclose the Rubredoxin-like domain. Positions 20, 23, 53, and 56 each coordinate Fe cation.

This sequence belongs to the rubredoxin family. Fe(3+) serves as cofactor.

In terms of biological role, rubredoxin is a small nonheme, iron protein lacking acid-labile sulfide. Its single Fe, chelated to 4 Cys, functions as an electron acceptor and may also stabilize the conformation of the molecule. Could be involved in hydrogenase-linked redox processes. The protein is Rubredoxin (rub) of Synechocystis sp. (strain ATCC 27184 / PCC 6803 / Kazusa).